We begin with the raw amino-acid sequence, 421 residues long: Polygalacturonase (421 aa).

The first 20 residues, 1 to 20 (MKFSTAIIVSFLFIADFCAA), serve as a signal peptide directing secretion. Asn-156 and Asn-180 each carry an N-linked (GlcNAc...) asparagine glycan. 2 PbH1 repeats span residues 178-204 (CKNITFDGFTITAPGDSPNTDGIHMGK) and 205-226 (STDVKILNTNIGTGDDCVSIGD). Catalysis depends on Asp-219, which acts as the Proton donor. His-242 is an active-site residue. 2 PbH1 repeats span residues 258-279 (VEGITVKNCTLTATDNGVRIKT) and 289-310 (VSDIHFEDITMTNVKNPVIIDQ). Asn-265 carries N-linked (GlcNAc...) asparagine glycosylation. The disordered stretch occupies residues 394–421 (PGAPAASTTATPAASKTATPAAGKSPAK).

This sequence belongs to the glycosyl hydrolase 28 family. In terms of tissue distribution, pollen specific.

It localises to the secreted. Its subcellular location is the cell wall. The enzyme catalyses (1,4-alpha-D-galacturonosyl)n+m + H2O = (1,4-alpha-D-galacturonosyl)n + (1,4-alpha-D-galacturonosyl)m.. May function in the depolymerization of the pectin in its walls during pollen tube elongation, or in that of the pistil during pollination. The chain is Polygalacturonase from Medicago sativa (Alfalfa).